A 64-amino-acid polypeptide reads, in one-letter code: Large ribosomal subunit protein uL29 (64 aa).

It belongs to the universal ribosomal protein uL29 family.

The sequence is that of Large ribosomal subunit protein uL29 from Ralstonia pickettii (strain 12J).